Reading from the N-terminus, the 457-residue chain is Multidrug resistance protein MdtK (457 aa).

The next 12 membrane-spanning stretches (helical) occupy residues 11-31 (LLALAIPVILAQVAQTAMGFV), 53-73 (IWLPAILFGHGLLLALTPVIA), 93-113 (WLAGFVSVLVMIVLWNAGYII), 127-147 (AVGYLRALLWGAPGYLFFQVA), 160-180 (GMVMGFLGLLVNIPVNYIFIY), 188-208 (LGGIGCGVATAAVYWVMFIAM), 243-263 (LPIALALFFEVTLFAVVALLV), 276-296 (IALNFSSLMFVLPMSLAAAVT), 314-334 (AARTGLGVGICMAVVTAIFTV), 350-370 (VVALAAQLMLLAAVYQISDSI), 387-407 (IFFITFTAYWVLGLPSGYILA), and 418-438 (PAGFWMGFIIGLTSAAVLMML).

It belongs to the multi antimicrobial extrusion (MATE) (TC 2.A.66.1) family. MdtK subfamily.

It localises to the cell inner membrane. Its function is as follows. Multidrug efflux pump that functions probably as a Na(+)/drug antiporter. This Salmonella heidelberg (strain SL476) protein is Multidrug resistance protein MdtK.